The sequence spans 115 residues: DNA-directed RNA polymerase II subunit RPB11-b1 (115 aa).

It belongs to the archaeal Rpo11/eukaryotic RPB11/RPC19 RNA polymerase subunit family. Component of the RNA polymerase II (Pol II) complex consisting of 12 subunits. As to expression, ubiquitously expressed.

The protein resides in the nucleus. Its function is as follows. DNA-dependent RNA polymerase catalyzes the transcription of DNA into RNA using the four ribonucleoside triphosphates as substrates. Component of RNA polymerase II which synthesizes mRNA precursors and many functional non-coding RNAs. Pol II is the central component of the basal RNA polymerase II transcription machinery. It is composed of mobile elements that move relative to each other. RPB11 is part of the core element with the central large cleft. This is DNA-directed RNA polymerase II subunit RPB11-b1 (POLR2J2) from Homo sapiens (Human).